Reading from the N-terminus, the 387-residue chain is Phosphoglycerate kinase (387 aa).

Residues 21-23 (DLN), R36, 59-62 (HLGR), R113, and R146 contribute to the substrate site. ATP-binding positions include K197, E314, and 340 to 343 (GGDT).

This sequence belongs to the phosphoglycerate kinase family. Monomer.

The protein resides in the cytoplasm. It catalyses the reaction (2R)-3-phosphoglycerate + ATP = (2R)-3-phospho-glyceroyl phosphate + ADP. Its pathway is carbohydrate degradation; glycolysis; pyruvate from D-glyceraldehyde 3-phosphate: step 2/5. The sequence is that of Phosphoglycerate kinase from Pseudomonas fluorescens (strain SBW25).